Consider the following 118-residue polypeptide: Small ribosomal subunit protein uS13 (118 aa).

The tract at residues 94–118 (SLPLRGQRTKTNARTRKGPRKPIRK) is disordered.

This sequence belongs to the universal ribosomal protein uS13 family. As to quaternary structure, part of the 30S ribosomal subunit. Forms a loose heterodimer with protein S19. Forms two bridges to the 50S subunit in the 70S ribosome.

In terms of biological role, located at the top of the head of the 30S subunit, it contacts several helices of the 16S rRNA. In the 70S ribosome it contacts the 23S rRNA (bridge B1a) and protein L5 of the 50S subunit (bridge B1b), connecting the 2 subunits; these bridges are implicated in subunit movement. Contacts the tRNAs in the A and P-sites. The polypeptide is Small ribosomal subunit protein uS13 (Shewanella denitrificans (strain OS217 / ATCC BAA-1090 / DSM 15013)).